The chain runs to 155 residues: Small ribosomal subunit protein uS7cz/uS7cy (155 aa).

Belongs to the universal ribosomal protein uS7 family. As to quaternary structure, part of the 30S ribosomal subunit.

It localises to the plastid. Its subcellular location is the chloroplast. Its function is as follows. One of the primary rRNA binding proteins, it binds directly to 16S rRNA where it nucleates assembly of the head domain of the 30S subunit. In Daucus carota (Wild carrot), this protein is Small ribosomal subunit protein uS7cz/uS7cy (rps7-A).